Here is a 550-residue protein sequence, read N- to C-terminus: Beta-cubebene synthase (550 aa).

Asp303, Asp307, Asp447, and Glu455 together coordinate Mg(2+). A DDXXD motif motif is present at residues 303 to 307; sequence DDTYD.

The protein belongs to the terpene synthase family. Tpsa subfamily. Requires Mg(2+) as cofactor. In terms of tissue distribution, expressed in young developing leaves and in stamens. Not detected in tepals and carpels.

The catalysed reaction is (2E,6E)-farnesyl diphosphate = beta-cubebene + diphosphate. It functions in the pathway secondary metabolite biosynthesis; terpenoid biosynthesis. Functionally, sesquiterpene synthase converting farnesyl diphosphate into beta-cubebene (24.5%), alpha-muurolene (19.3%), delta-cadinol (18.6%), delta-elemene (16.0%), tau-muurolene (10.8%), and beta-elemene (10.8%). No activity with geranyl diphosphate or geranylgeranyl diphosphate. This Magnolia grandiflora (Southern magnolia) protein is Beta-cubebene synthase.